Here is a 109-residue protein sequence, read N- to C-terminus: Ribonuclease P protein component (109 aa).

It belongs to the RnpA family. Consists of a catalytic RNA component (M1 or rnpB) and a protein subunit.

It carries out the reaction Endonucleolytic cleavage of RNA, removing 5'-extranucleotides from tRNA precursor.. Functionally, RNaseP catalyzes the removal of the 5'-leader sequence from pre-tRNA to produce the mature 5'-terminus. It can also cleave other RNA substrates such as 4.5S RNA. The protein component plays an auxiliary but essential role in vivo by binding to the 5'-leader sequence and broadening the substrate specificity of the ribozyme. The chain is Ribonuclease P protein component from Streptococcus agalactiae serotype III (strain NEM316).